A 345-amino-acid chain; its full sequence is Olfactory receptor 11G2 (345 aa).

Residues 1–62 (MHFLSQNDLN…LGFPCPREGQ (62 aa)) lie on the Extracellular side of the membrane. The N-linked (GlcNAc...) asparagine glycan is linked to asparagine 43. The chain crosses the membrane as a helical span at residues 63–83 (ILLFVLFTVVYLLTLMGNGSI). The Cytoplasmic segment spans residues 84–92 (ICAVHWDQR). A helical membrane pass occupies residues 93-113 (LHAPMYILLANFSFLEICYVT). The Extracellular portion of the chain corresponds to 114–135 (STVPSMLANFLSDTKIISFSGC). Cysteines 135 and 217 form a disulfide. The helical transmembrane segment at 136 to 156 (FLQFYFFFSLGSTECFFLAVM) threads the bilayer. Residues 157-181 (AFDRYLAICRPLRYPTIMTRRLCTN) are Cytoplasmic-facing. Residues 182–202 (LVVNCWVLGFIWFLIPIVNIS) form a helical membrane-spanning segment. Topologically, residues 203–241 (QMSFCGSRIIDHFLCDPAPLLTLTCKKGPVIELVFSVLS) are extracellular. A helical membrane pass occupies residues 242-264 (PLPVFMLFLFIVGSYALVVRAVL). The Cytoplasmic portion of the chain corresponds to 265–275 (RVPSAAGRRKA). The chain crosses the membrane as a helical span at residues 276–296 (FSTCGSHLAVVSLFYGSVLVM). The Extracellular portion of the chain corresponds to 297–309 (YGSPPSKNEAGKQ). Residues 310–330 (KTVTLFYSVVTPLLNPVIYSL) form a helical membrane-spanning segment. The Cytoplasmic segment spans residues 331–345 (RNKDMRKALKKFWGT).

This sequence belongs to the G-protein coupled receptor 1 family.

It localises to the cell membrane. In terms of biological role, odorant receptor. The sequence is that of Olfactory receptor 11G2 (OR11G2) from Homo sapiens (Human).